The following is a 175-amino-acid chain: Anterior gradient protein 2 homolog (175 aa).

A signal peptide spans 1 to 20; sequence MEKFSVSAILLLVAISGTLA. The segment at 21–40 is required to promote cell adhesion; the sequence is KDTTVKSGAKKDPKDSRPKL. Residues 24–44 form a disordered region; the sequence is TVKSGAKKDPKDSRPKLPQTL. The segment covering 29-38 has biased composition (basic and acidic residues); that stretch reads AKKDPKDSRP. 2 short sequence motifs (homodimer stabilization; interchain) span residues 45–54 and 60–67; these read SRGWGDQLIW and EALYRSKT.

This sequence belongs to the AGR family. As to quaternary structure, monomer and homodimer. Interacts with LYPD3 and DAG1 (alphaDAG1). Interacts with MUC2; disulfide-linked. Expressed in lung, skeletal muscle, testis, liver, stomach, colon, small intestine, the goblet cells of the intestine and the mucuous neck cells of the stomach.

It localises to the secreted. It is found in the endoplasmic reticulum. Functionally, required for MUC2 post-transcriptional synthesis and secretion. May play a role in the production of mucus by intestinal cells. Proto-oncogene that may play a role in cell migration, cell differentiation and cell growth. Promotes cell adhesion. The protein is Anterior gradient protein 2 homolog (Agr2) of Mus musculus (Mouse).